The primary structure comprises 170 residues: Ribosome maturation factor RimM (170 aa).

One can recognise a PRC barrel domain in the interval 98–170 (PDEYYWVDLE…LIVVDWDPDF (73 aa)).

The protein belongs to the RimM family. Binds ribosomal protein uS19.

Its subcellular location is the cytoplasm. In terms of biological role, an accessory protein needed during the final step in the assembly of 30S ribosomal subunit, possibly for assembly of the head region. Essential for efficient processing of 16S rRNA. May be needed both before and after RbfA during the maturation of 16S rRNA. It has affinity for free ribosomal 30S subunits but not for 70S ribosomes. The sequence is that of Ribosome maturation factor RimM from Xanthomonas oryzae pv. oryzae (strain MAFF 311018).